The following is a 314-amino-acid chain: Beta-lactamase 2 (314 aa).

The N-terminal stretch at 1–26 (MLHTRIRRATLGAVAALSLVPVMACG) is a signal peptide. A compositionally biased stretch (low complexity) spans 32-47 (DAAEPAGSAPSSSAAA). The disordered stretch occupies residues 32–51 (DAAEPAGSAPSSSAAAHKPG). Ser96 serves as the catalytic Acyl-ester intermediate. 258–260 (KTG) is a binding site for substrate.

Belongs to the class-A beta-lactamase family.

It catalyses the reaction a beta-lactam + H2O = a substituted beta-amino acid. The sequence is that of Beta-lactamase 2 (blaU) from Streptomyces cacaoi.